A 418-amino-acid polypeptide reads, in one-letter code: 3-isopropylmalate dehydratase large subunit (418 aa).

Residues C299, C359, and C362 each coordinate [4Fe-4S] cluster.

This sequence belongs to the aconitase/IPM isomerase family. LeuC type 2 subfamily. Heterodimer of LeuC and LeuD. [4Fe-4S] cluster serves as cofactor.

It carries out the reaction (2R,3S)-3-isopropylmalate = (2S)-2-isopropylmalate. Its pathway is amino-acid biosynthesis; L-leucine biosynthesis; L-leucine from 3-methyl-2-oxobutanoate: step 2/4. Catalyzes the isomerization between 2-isopropylmalate and 3-isopropylmalate, via the formation of 2-isopropylmaleate. The sequence is that of 3-isopropylmalate dehydratase large subunit from Nitratidesulfovibrio vulgaris (strain DSM 19637 / Miyazaki F) (Desulfovibrio vulgaris).